The sequence spans 607 residues: Matrix metalloproteinase-16 (607 aa).

A signal peptide spans 1–31 (MILLAFSSGRRLDFVHRSGVFFFQTLLWILC). Positions 32 to 119 (ATVCGTEQYF…SSKFNIRRKR (88 aa)) are excised as a propeptide. A glycan (N-linked (GlcNAc...) asparagine) is linked at Asn-83. The short motif at 99 to 106 (PRCGVPDQ) is the Cysteine switch element. Cys-101 is a Zn(2+) binding site. Residues 120–564 (YALTGQKWQH…LDNTASTVKA (445 aa)) lie on the Extracellular side of the membrane. Ca(2+) is bound at residue Asp-183. Positions 193 and 195 each coordinate Zn(2+). Positions 200, 201, 203, and 205 each coordinate Ca(2+). Zn(2+) is bound at residue His-208. Gly-215, Gly-217, and Asp-219 together coordinate Ca(2+). His-221 is a Zn(2+) binding site. Ca(2+) contacts are provided by Asp-223 and Glu-226. Zn(2+) is bound at residue His-246. Residue Glu-247 is part of the active site. The Zn(2+) site is built by His-250 and His-256. Residues 281–340 (DDLQGIQKIYGPPDKIPPPTRPLPTVPPHRSVPPADPRKNDRPKPPRPPTGRPSYPGAKP) are disordered. Residues 294 to 315 (DKIPPPTRPLPTVPPHRSVPPA) show a composition bias toward pro residues. Hemopexin repeat units follow at residues 340–388 (PNIC…WRGL), 389–434 (PPSI…GNGI), 436–484 (PHGI…KGIP), and 485–532 (ESPQ…FMGC). A disulfide bond links Cys-343 and Cys-532. Residues 565-585 (IAIVIPCILALCLLVLVYTVF) form a helical membrane-spanning segment. At 586 to 607 (QFKRKGTPRHILYCKRSMQEWV) the chain is on the cytoplasmic side.

Belongs to the peptidase M10A family. As to quaternary structure, interacts with CSPG4 through CSPG4 chondroitin sulfate glycosaminoglycan. Zn(2+) serves as cofactor. It depends on Ca(2+) as a cofactor. Post-translationally, the precursor is cleaved by a furin endopeptidase. In terms of tissue distribution, strongly expressed in the lung, brain and smooth muscle cells. Weakly detectable in the spleen and liver and indetectable in the heart, skeletal muscle and kidney.

It is found in the cell membrane. The protein localises to the secreted. The protein resides in the extracellular space. It localises to the extracellular matrix. Its function is as follows. Endopeptidase that degrades various components of the extracellular matrix, such as collagen type III and fibronectin. Activates progelatinase A. Involved in the matrix remodeling of blood vessels. The short isoform efficiently converts progelatinase A to the intermediate form but not to the mature one. It has no effect on type I, II, IV and V collagen. However, upon interaction with CSPG4, it may be involved in degradation and invasion of type I collagen by melanoma cells. This is Matrix metalloproteinase-16 (Mmp16) from Rattus norvegicus (Rat).